Here is a 396-residue protein sequence, read N- to C-terminus: Unsaturated chondroitin disaccharide hydrolase (396 aa).

Aspartate 113 acts as the Nucleophile in catalysis. Positions 113, 173, 231, 233, 245, 249, 363, and 366 each coordinate substrate. The active-site Proton donor is the aspartate 173.

The protein belongs to the glycosyl hydrolase 88 family. In terms of assembly, monomer.

It catalyses the reaction beta-D-4-deoxy-Delta(4)-GlcpA-(1-&gt;3)-beta-D-GalpNAc6S + H2O = N-acetyl-beta-D-galactosamine 6-sulfate + 5-dehydro-4-deoxy-D-glucuronate. Functionally, catalyzes the hydrolysis of unsaturated hyaluronate and chondroitin disaccharides. Also degrades unsaturated heparin disaccharides. Releases 4-deoxy-4,5-didehydro D-glucuronic acid or 4-deoxy-4,5-didehydro L-iduronic acid from chondroitin disaccharides, hyaluronan disaccharides and heparin disaccharides and cleaves both glycosidic (1-&gt;3) and (1-&gt;4) bonds. Prefers sulfated glycosaminoglycans compared to unsulfated glycosaminoglycans. Probably required for mammalian cells invasion through the degradation of extracellular sulfated glycosaminoglycans such as chondroitin and hyaluronan. The chain is Unsaturated chondroitin disaccharide hydrolase (ugl) from Streptococcus pneumoniae (strain ATCC BAA-255 / R6).